The primary structure comprises 3187 residues: Cilia- and flagella-associated protein 47 (3187 aa).

In terms of domain architecture, Calponin-homology (CH) spans 1746-1869 (SDSERILLSW…LCVYMYERLP (124 aa)). A disordered region spans residues 2024 to 2052 (KLTESRQYPKHDDDMSSSGSDTDQGCSDS). Over residues 2026 to 2037 (TESRQYPKHDDD) the composition is skewed to basic and acidic residues.

Interacts with CFAP65. In terms of tissue distribution, highly expressed in spermatzoa (at protein level).

It localises to the cytoplasm. The protein resides in the cytoskeleton. Its subcellular location is the flagellum basal body. Functionally, plays a role in flagellar formation and sperm motility. The protein is Cilia- and flagella-associated protein 47 of Homo sapiens (Human).